The sequence spans 381 residues: L-lactate dehydrogenase (381 aa).

One can recognise an FMN hydroxy acid dehydrogenase domain in the interval 1 to 380 (MIISASTDYR…SRDSLVRELG (380 aa)). Tyr-24 provides a ligand contact to substrate. FMN contacts are provided by Ser-106 and Gln-127. Position 129 (Tyr-129) interacts with substrate. Position 155 (Thr-155) interacts with FMN. Arg-164 contributes to the substrate binding site. FMN is bound at residue Lys-251. The active-site Proton acceptor is the His-275. Arg-278 is a substrate binding site. 306 to 330 (DSGIRSGLDVVRMIALGADTVLIGR) provides a ligand contact to FMN.

It belongs to the FMN-dependent alpha-hydroxy acid dehydrogenase family. Homotetramer. FMN serves as cofactor.

Its subcellular location is the cell inner membrane. It catalyses the reaction (S)-lactate + A = pyruvate + AH2. Catalyzes the conversion of L-lactate to pyruvate. Is coupled to the respiratory chain. The chain is L-lactate dehydrogenase from Pseudomonas putida (strain W619).